A 210-amino-acid polypeptide reads, in one-letter code: Protein SgcE (210 aa).

Substrate is bound at residue Ser6. Residues His31, Asp33, and His64 each contribute to the a divalent metal cation site. The active-site Proton acceptor is the Asp33. Residues His64, Asp140–Gly143, Asp169–Gly171, and Gly191–Arg192 each bind substrate. Residue Asp169 coordinates a divalent metal cation. The Proton donor role is filled by Asp169.

Belongs to the ribulose-phosphate 3-epimerase family. Co(2+) is required as a cofactor. Requires Fe(2+) as cofactor. It depends on Mn(2+) as a cofactor. The cofactor is Zn(2+).

Its pathway is carbohydrate degradation. Probable pentose-5-phosphate 3-epimerase. The chain is Protein SgcE (sgcE) from Escherichia coli (strain K12).